Consider the following 71-residue polypeptide: Small integral membrane protein 31 (71 aa).

Residues 8-28 (LEVAFILLAFFIFSLFTLASI) traverse the membrane as a helical segment. Basic residues predominate over residues 48–57 (RKRKEFKGKK). Residues 48–71 (RKRKEFKGKKNCSDEEHKIETMQP) form a disordered region. Residue asparagine 58 is glycosylated (N-linked (GlcNAc...) asparagine). Over residues 58–71 (NCSDEEHKIETMQP) the composition is skewed to basic and acidic residues.

It localises to the membrane. This Mus musculus (Mouse) protein is Small integral membrane protein 31.